The chain runs to 396 residues: 1-deoxy-D-xylulose 5-phosphate reductoisomerase (396 aa).

NADPH contacts are provided by T15, G16, S17, I18, G41, and N129. K130 serves as a coordination point for 1-deoxy-D-xylulose 5-phosphate. E131 contributes to the NADPH binding site. D155 lines the Mn(2+) pocket. 1-deoxy-D-xylulose 5-phosphate contacts are provided by S156, E157, S182, and H205. E157 lines the Mn(2+) pocket. G211 is a binding site for NADPH. 1-deoxy-D-xylulose 5-phosphate contacts are provided by S218, N223, K224, and E227. Position 227 (E227) interacts with Mn(2+).

It belongs to the DXR family. Mg(2+) serves as cofactor. It depends on Mn(2+) as a cofactor.

The enzyme catalyses 2-C-methyl-D-erythritol 4-phosphate + NADP(+) = 1-deoxy-D-xylulose 5-phosphate + NADPH + H(+). The protein operates within isoprenoid biosynthesis; isopentenyl diphosphate biosynthesis via DXP pathway; isopentenyl diphosphate from 1-deoxy-D-xylulose 5-phosphate: step 1/6. Catalyzes the NADPH-dependent rearrangement and reduction of 1-deoxy-D-xylulose-5-phosphate (DXP) to 2-C-methyl-D-erythritol 4-phosphate (MEP). The polypeptide is 1-deoxy-D-xylulose 5-phosphate reductoisomerase (Xanthomonas oryzae pv. oryzae (strain MAFF 311018)).